The chain runs to 321 residues: Sideroflexin-3 (321 aa).

Met1 carries the N-acetylmethionine modification. 4 helical membrane-spanning segments follow: residues 146–164 (LGTA…ALGL), 174–194 (LVGR…NIPL), 226–246 (FQVV…PPLI), and 266–286 (LQVG…CALF).

Belongs to the sideroflexin family.

The protein resides in the mitochondrion membrane. The enzyme catalyses L-serine(in) = L-serine(out). Mitochondrial serine transporter that mediates transport of serine into mitochondria, an important step of the one-carbon metabolism pathway. Mitochondrial serine is converted to glycine and formate, which then exits to the cytosol where it is used to generate the charged folates that serve as one-carbon donors. The protein is Sideroflexin-3 of Homo sapiens (Human).